A 337-amino-acid chain; its full sequence is Protein ABHD13 (337 aa).

The helical; Signal-anchor for type II membrane protein transmembrane segment at 30–50 (LLALILTFHLYGGFVLLGLIL) threads the bilayer. Active-site charge relay system residues include Ser-193, Asp-268, and His-298. N-linked (GlcNAc...) asparagine glycosylation occurs at Asn-299.

The protein belongs to the serine esterase family.

Its subcellular location is the membrane. The sequence is that of Protein ABHD13 from Danio rerio (Zebrafish).